Consider the following 272-residue polypeptide: Phosphate import ATP-binding protein PstB (272 aa).

The region spanning 26 to 267 (LDIKNLDLYY…PSEKQTEDYI (242 aa)) is the ABC transporter domain. ATP is bound at residue 58 to 65 (GPSGCGKS).

Belongs to the ABC transporter superfamily. Phosphate importer (TC 3.A.1.7) family. In terms of assembly, the complex is composed of two ATP-binding proteins (PstB), two transmembrane proteins (PstC and PstA) and a solute-binding protein (PstS).

The protein resides in the cell inner membrane. It carries out the reaction phosphate(out) + ATP + H2O = ADP + 2 phosphate(in) + H(+). Functionally, part of the ABC transporter complex PstSACB involved in phosphate import. Responsible for energy coupling to the transport system. The chain is Phosphate import ATP-binding protein PstB from Idiomarina loihiensis (strain ATCC BAA-735 / DSM 15497 / L2-TR).